A 168-amino-acid chain; its full sequence is Ribosome maturation factor RimP (168 aa).

The protein belongs to the RimP family.

It localises to the cytoplasm. Its function is as follows. Required for maturation of 30S ribosomal subunits. In Bordetella parapertussis (strain 12822 / ATCC BAA-587 / NCTC 13253), this protein is Ribosome maturation factor RimP.